The primary structure comprises 415 residues: Methylaspartate ammonia-lyase 2 (415 aa).

Residue Gln-173 participates in (2S,3S)-3-methyl-L-aspartate binding. Mg(2+)-binding residues include Asp-238, Glu-273, and Asp-307. Residue Gln-329 participates in (2S,3S)-3-methyl-L-aspartate binding. Lys-331 functions as the Proton acceptor in the catalytic mechanism. 360–361 (TC) contacts (2S,3S)-3-methyl-L-aspartate.

Belongs to the methylaspartate ammonia-lyase family. As to quaternary structure, homodimer. Mg(2+) is required as a cofactor.

It catalyses the reaction (2S,3S)-3-methyl-L-aspartate = mesaconate + NH4(+). Its pathway is amino-acid degradation; L-glutamate degradation via mesaconate pathway; acetate and pyruvate from L-glutamate: step 2/4. Functionally, involved in the methylaspartate cycle. Catalyzes the formation of the alpha,beta-unsaturated bond by the reversible anti elimination of ammonia from L-threo-beta-methylaspartate (L-threo-(2S,3S)-3-methylaspartate) to give mesaconate. This Carboxydothermus hydrogenoformans (strain ATCC BAA-161 / DSM 6008 / Z-2901) protein is Methylaspartate ammonia-lyase 2.